Consider the following 105-residue polypeptide: Small ribosomal subunit protein eS24 (105 aa).

The disordered stretch occupies residues 86 to 105; the sequence is LERNKIEADEEADEEAAEEA. The segment covering 93–105 has biased composition (acidic residues); that stretch reads ADEEADEEAAEEA.

Belongs to the eukaryotic ribosomal protein eS24 family.

This Natronomonas pharaonis (strain ATCC 35678 / DSM 2160 / CIP 103997 / JCM 8858 / NBRC 14720 / NCIMB 2260 / Gabara) (Halobacterium pharaonis) protein is Small ribosomal subunit protein eS24.